The following is a 237-amino-acid chain: MRPSRRAPDELRAVSLERGVVKYAEGSCLVKFGDTHVLVTATLEERLPPWLKGQGRGWVTAEYGMLPRATLERTRREAAAGKQNGRTVEIQRLIGRSLRTIVDLQALGERQITVDCDVLQADGGTRTASITGAWVALADCLAWMKTRNMLKGQVMRDNVAAISCGIYNGTPVLDLDYAEDSEAETDANFVMTGDGRIVEVQGTAEKTPFSQDEFLALMALAQKGVARLVDLQKMAVA.

Residues Arg86 and 124–126 (GTR) each bind phosphate.

This sequence belongs to the RNase PH family. Homohexameric ring arranged as a trimer of dimers.

It catalyses the reaction tRNA(n+1) + phosphate = tRNA(n) + a ribonucleoside 5'-diphosphate. In terms of biological role, phosphorolytic 3'-5' exoribonuclease that plays an important role in tRNA 3'-end maturation. Removes nucleotide residues following the 3'-CCA terminus of tRNAs; can also add nucleotides to the ends of RNA molecules by using nucleoside diphosphates as substrates, but this may not be physiologically important. Probably plays a role in initiation of 16S rRNA degradation (leading to ribosome degradation) during starvation. In Rhodopseudomonas palustris (strain HaA2), this protein is Ribonuclease PH.